The following is a 293-amino-acid chain: 33 kDa chaperonin (293 aa).

2 disulfides stabilise this stretch: cysteine 230-cysteine 232 and cysteine 263-cysteine 266.

The protein belongs to the HSP33 family. In terms of processing, under oxidizing conditions two disulfide bonds are formed involving the reactive cysteines. Under reducing conditions zinc is bound to the reactive cysteines and the protein is inactive.

The protein localises to the cytoplasm. Its function is as follows. Redox regulated molecular chaperone. Protects both thermally unfolding and oxidatively damaged proteins from irreversible aggregation. Plays an important role in the bacterial defense system toward oxidative stress. This is 33 kDa chaperonin from Edwardsiella ictaluri (strain 93-146).